We begin with the raw amino-acid sequence, 142 residues long: Large ribosomal subunit protein uL13 (142 aa).

Belongs to the universal ribosomal protein uL13 family. Part of the 50S ribosomal subunit.

Functionally, this protein is one of the early assembly proteins of the 50S ribosomal subunit, although it is not seen to bind rRNA by itself. It is important during the early stages of 50S assembly. The chain is Large ribosomal subunit protein uL13 from Janthinobacterium sp. (strain Marseille) (Minibacterium massiliensis).